We begin with the raw amino-acid sequence, 306 residues long: Ornithine carbamoyltransferase (306 aa).

Residues 53 to 56 (STRT), Gln-80, Arg-104, and 131 to 134 (HPCQ) contribute to the carbamoyl phosphate site. L-ornithine-binding positions include Asn-162, Asp-220, and 224 to 225 (SM). Residues 260–261 (CL) and Arg-288 each bind carbamoyl phosphate.

This sequence belongs to the aspartate/ornithine carbamoyltransferase superfamily. OTCase family.

It is found in the cytoplasm. It catalyses the reaction carbamoyl phosphate + L-ornithine = L-citrulline + phosphate + H(+). Its pathway is amino-acid biosynthesis; L-arginine biosynthesis; L-arginine from L-ornithine and carbamoyl phosphate: step 1/3. Functionally, reversibly catalyzes the transfer of the carbamoyl group from carbamoyl phosphate (CP) to the N(epsilon) atom of ornithine (ORN) to produce L-citrulline. This is Ornithine carbamoyltransferase from Dechloromonas aromatica (strain RCB).